Here is a 351-residue protein sequence, read N- to C-terminus: GDSL esterase/lipase At3g14820 (351 aa).

The N-terminal stretch at Met-1–Ala-22 is a signal peptide. Asn-25 carries an N-linked (GlcNAc...) asparagine glycan. The active-site Nucleophile is the Ser-39. Residues Asp-325 and His-328 contribute to the active site.

Belongs to the 'GDSL' lipolytic enzyme family.

The protein localises to the secreted. This is GDSL esterase/lipase At3g14820 from Arabidopsis thaliana (Mouse-ear cress).